The following is a 122-amino-acid chain: Small ribosomal subunit protein uS13 (122 aa).

The interval 99-122 (RGQRTHTNARTRKGPAKAIAGKKK) is disordered.

It belongs to the universal ribosomal protein uS13 family. In terms of assembly, part of the 30S ribosomal subunit. Forms a loose heterodimer with protein S19. Forms two bridges to the 50S subunit in the 70S ribosome.

In terms of biological role, located at the top of the head of the 30S subunit, it contacts several helices of the 16S rRNA. In the 70S ribosome it contacts the 23S rRNA (bridge B1a) and protein L5 of the 50S subunit (bridge B1b), connecting the 2 subunits; these bridges are implicated in subunit movement. Contacts the tRNAs in the A and P-sites. This chain is Small ribosomal subunit protein uS13, found in Parvibaculum lavamentivorans (strain DS-1 / DSM 13023 / NCIMB 13966).